The following is a 21-amino-acid chain: Major outer membrane protein P44 (21 aa).

As to quaternary structure, monomer.

Its subcellular location is the cell outer membrane. In Mannheimia haemolytica (Pasteurella haemolytica), this protein is Major outer membrane protein P44.